Here is a 343-residue protein sequence, read N- to C-terminus: Glycerol-3-phosphate dehydrogenase [NAD(P)+] (343 aa).

Ser-15, Phe-16, Arg-36, and Lys-110 together coordinate NADPH. Sn-glycerol 3-phosphate is bound by residues Lys-110 and Gly-138. Ala-142 lines the NADPH pocket. The sn-glycerol 3-phosphate site is built by Lys-193, Asp-246, Ser-256, Arg-257, and Asn-258. Residue Lys-193 is the Proton acceptor of the active site. Arg-257 contributes to the NADPH binding site. Glu-283 serves as a coordination point for NADPH.

Belongs to the NAD-dependent glycerol-3-phosphate dehydrogenase family.

It is found in the cytoplasm. The catalysed reaction is sn-glycerol 3-phosphate + NAD(+) = dihydroxyacetone phosphate + NADH + H(+). It catalyses the reaction sn-glycerol 3-phosphate + NADP(+) = dihydroxyacetone phosphate + NADPH + H(+). Its pathway is membrane lipid metabolism; glycerophospholipid metabolism. Catalyzes the reduction of the glycolytic intermediate dihydroxyacetone phosphate (DHAP) to sn-glycerol 3-phosphate (G3P), the key precursor for phospholipid synthesis. The polypeptide is Glycerol-3-phosphate dehydrogenase [NAD(P)+] (Alcanivorax borkumensis (strain ATCC 700651 / DSM 11573 / NCIMB 13689 / SK2)).